We begin with the raw amino-acid sequence, 439 residues long: Putative myrosinase 3 (439 aa).

Residues 1-19 (MKFRALGLVLLLAVETCKA) form the signal peptide. An N-linked (GlcNAc...) asparagine glycan is attached at Asn33. A beta-D-glucoside-binding positions include His145, 190–191 (NQ), and Tyr316. Residue Asn336 is glycosylated (N-linked (GlcNAc...) asparagine). A beta-D-glucoside-binding residues include Glu386 and Trp404. Glu386 functions as the Nucleophile in the catalytic mechanism.

It belongs to the glycosyl hydrolase 1 family. In terms of tissue distribution, expressed specifically in stamens and petals.

The catalysed reaction is a thioglucoside + H2O = a sugar + a thiol.. The sequence is that of Putative myrosinase 3 from Arabidopsis thaliana (Mouse-ear cress).